Reading from the N-terminus, the 253-residue chain is Triosephosphate isomerase (253 aa).

9-11 (NWK) is a binding site for substrate. His95 serves as the catalytic Electrophile. Residue Glu167 is the Proton acceptor of the active site. Residues Gly173, Ser213, and 234–235 (GG) contribute to the substrate site. Ser213 is modified (phosphoserine).

It belongs to the triosephosphate isomerase family. In terms of assembly, homodimer.

The protein localises to the cytoplasm. It catalyses the reaction D-glyceraldehyde 3-phosphate = dihydroxyacetone phosphate. The protein operates within carbohydrate biosynthesis; gluconeogenesis. It participates in carbohydrate degradation; glycolysis; D-glyceraldehyde 3-phosphate from glycerone phosphate: step 1/1. In terms of biological role, involved in the gluconeogenesis. Catalyzes stereospecifically the conversion of dihydroxyacetone phosphate (DHAP) to D-glyceraldehyde-3-phosphate (G3P). The polypeptide is Triosephosphate isomerase (Lysinibacillus sphaericus (strain C3-41)).